The chain runs to 122 residues: Large ribosomal subunit protein uL14 (122 aa).

The protein belongs to the universal ribosomal protein uL14 family. As to quaternary structure, part of the 50S ribosomal subunit. Forms a cluster with proteins L3 and L19. In the 70S ribosome, L14 and L19 interact and together make contacts with the 16S rRNA in bridges B5 and B8.

Binds to 23S rRNA. Forms part of two intersubunit bridges in the 70S ribosome. The protein is Large ribosomal subunit protein uL14 of Latilactobacillus sakei subsp. sakei (strain 23K) (Lactobacillus sakei subsp. sakei).